An 823-amino-acid polypeptide reads, in one-letter code: Nuclear factor I family protein (823 aa).

Residues 1–56 are disordered; sequence MEPHLKIDVSSASGSTTTGATASTSEAPQDSQAQQTMPPPSSDWSNQFNSPEAVSP. Positions 10–25 are enriched in low complexity; sequence SSASGSTTTGATASTS. The span at 26–52 shows a compositional bias: polar residues; the sequence is EAPQDSQAQQTMPPPSSDWSNQFNSPE. Residues 61 to 253 constitute a DNA-binding region (CTF/NF-I); sequence IKCFSPYSQE…DVDTKITLTY (193 aa). 3 disordered regions span residues 364 to 408, 433 to 468, and 777 to 823; these read PYPI…NDEV, SRTQ…AFRS, and APPA…NEKK. Residues 386–396 are compositionally biased toward basic and acidic residues; that stretch reads PSEKRSRDISS. Positions 433–447 are enriched in polar residues; it reads SRTQQNQGAPGTSRQ. The span at 777–794 shows a compositional bias: low complexity; the sequence is APPACSPSSSNSSLGAAN.

The protein belongs to the CTF/NF-I family. Expressed in muscles, neurons and intestinal cells.

The protein localises to the nucleus. Functionally, probable transcription factor which recognizes and binds the palindromic sequence 5'-TTGGCANNNTGCCAA-3' present in promoters. Plays a role in locomotion, pharyngeal pumping, egg-laying, and life span. The polypeptide is Nuclear factor I family protein (Caenorhabditis elegans).